The primary structure comprises 494 residues: Sulfate adenylyltransferase subunit 1 (494 aa).

The tr-type G domain maps to 24–240 (TRPLRLITCG…LELATVRSAQ (217 aa)). The segment at 33–40 (GSVDDGKS) is G1. 33-40 (GSVDDGKS) lines the GTP pocket. Residues 91–95 (GITID) are G2. The G3 stretch occupies residues 112–115 (DTPG). Residues 112–116 (DTPGH) and 167–170 (NKID) contribute to the GTP site. Residues 167 to 170 (NKID) are G4. A G5 region spans residues 204-206 (SAL).

The protein belongs to the TRAFAC class translation factor GTPase superfamily. Classic translation factor GTPase family. CysN/NodQ subfamily. In terms of assembly, heterodimer composed of CysD, the smaller subunit, and CysN.

It carries out the reaction sulfate + ATP + H(+) = adenosine 5'-phosphosulfate + diphosphate. It participates in sulfur metabolism; hydrogen sulfide biosynthesis; sulfite from sulfate: step 1/3. Its function is as follows. With CysD forms the ATP sulfurylase (ATPS) that catalyzes the adenylation of sulfate producing adenosine 5'-phosphosulfate (APS) and diphosphate, the first enzymatic step in sulfur assimilation pathway. APS synthesis involves the formation of a high-energy phosphoric-sulfuric acid anhydride bond driven by GTP hydrolysis by CysN coupled to ATP hydrolysis by CysD. The protein is Sulfate adenylyltransferase subunit 1 of Rhizobium tropici.